The chain runs to 315 residues: Homoserine O-succinyltransferase (315 aa).

Catalysis depends on Cys142, which acts as the Acyl-thioester intermediate. Positions 163 and 192 each coordinate substrate. His235 (proton acceptor) is an active-site residue. Residue Glu237 is part of the active site. Arg249 provides a ligand contact to substrate.

The protein belongs to the MetA family.

Its subcellular location is the cytoplasm. It carries out the reaction L-homoserine + succinyl-CoA = O-succinyl-L-homoserine + CoA. It participates in amino-acid biosynthesis; L-methionine biosynthesis via de novo pathway; O-succinyl-L-homoserine from L-homoserine: step 1/1. Transfers a succinyl group from succinyl-CoA to L-homoserine, forming succinyl-L-homoserine. This chain is Homoserine O-succinyltransferase, found in Tolumonas auensis (strain DSM 9187 / NBRC 110442 / TA 4).